We begin with the raw amino-acid sequence, 1221 residues long: RNA exonuclease 1 homolog (1221 aa).

Residues 37–46 (RGSGAPGDGG) are compositionally biased toward gly residues. The segment at 37–75 (RGSGAPGDGGEAPPAAGLGYDPYNPELPKPPAQRENGTL) is disordered. The stretch at 86-115 (LELELVNQAIEAVRSEVELEQRRYRELLET) forms a coiled coil. Positions 116-598 (TREHRSAEAP…STSSAGADVD (483 aa)) are disordered. An Omega-N-methylarginine modification is found at arginine 191. Phosphoserine is present on residues serine 287, serine 289, and serine 358. Residues 357 to 369 (ASPAQVQSSQDGG) show a composition bias toward low complexity. Positions 393-417 (AQGKDKTKDKGRGRPVEKPRADKKG) are enriched in basic and acidic residues. A phosphoserine mark is found at serine 459, serine 499, and serine 526. Residues 492–501 (LVERKARSLD) show a composition bias toward basic and acidic residues. Residues 498–577 (RSLDEGASQD…KRLKASPPPS (80 aa)) form an interaction with ELOA region. The span at 580–593 (PSSSSSSSSSTSSA) shows a compositional bias: low complexity. Serine 610 carries the phosphoserine modification. Disordered regions lie at residues 619 to 692 (IFNE…TAQE) and 735 to 775 (HIPN…TRTL). Residues 627–648 (KTEDRGRLARQPPKEEKSEEKG) are compositionally biased toward basic and acidic residues. Position 914 is a phosphoserine (serine 914). Positions 1060–1209 (IYALDCEMSY…EDAGACMHLV (150 aa)) constitute an Exonuclease domain.

It belongs to the REXO1/REXO3 family. In terms of assembly, interacts with TCEA2 and ELOA. In terms of tissue distribution, ubiquitously expressed.

The protein resides in the nucleus. In terms of biological role, seems to have no detectable effect on transcription elongation in vitro. This Homo sapiens (Human) protein is RNA exonuclease 1 homolog (REXO1).